Here is an 86-residue protein sequence, read N- to C-terminus: Anti-adapter protein IraP (86 aa).

Residues 1 to 36 (MKNLIAELLFKLAQKEEESKELCAQVEALEIIVTAM) are a coiled coil.

The protein belongs to the IraP family. In terms of assembly, interacts with RssB.

The protein resides in the cytoplasm. Its function is as follows. Inhibits RpoS proteolysis by regulating RssB activity, thereby increasing the stability of the sigma stress factor RpoS especially during phosphate starvation, but also in stationary phase and during nitrogen starvation. Its effect on RpoS stability is due to its interaction with RssB, which probably blocks the interaction of RssB with RpoS, and the consequent delivery of the RssB-RpoS complex to the ClpXP protein degradation pathway. This Escherichia coli O7:K1 (strain IAI39 / ExPEC) protein is Anti-adapter protein IraP.